The chain runs to 217 residues: Probable cytidylate kinase (217 aa).

9–17 is an ATP binding site; it reads GPAGSGKST.

It belongs to the cytidylate kinase family. Type 1 subfamily.

The catalysed reaction is CMP + ATP = CDP + ADP. It carries out the reaction dCMP + ATP = dCDP + ADP. This chain is Probable cytidylate kinase, found in Vairimorpha ceranae (strain BRL01) (Microsporidian parasite).